Here is a 257-residue protein sequence, read N- to C-terminus: Phosphate import ATP-binding protein PstB (257 aa).

Residues 11–252 (LEVRDLNFFY…PQKKATEDYI (242 aa)) form the ABC transporter domain. 43-50 (GPSGCGKS) is a binding site for ATP.

The protein belongs to the ABC transporter superfamily. Phosphate importer (TC 3.A.1.7) family. The complex is composed of two ATP-binding proteins (PstB), two transmembrane proteins (PstC and PstA) and a solute-binding protein (PstS).

Its subcellular location is the cell inner membrane. The enzyme catalyses phosphate(out) + ATP + H2O = ADP + 2 phosphate(in) + H(+). Its function is as follows. Part of the ABC transporter complex PstSACB involved in phosphate import. Responsible for energy coupling to the transport system. The chain is Phosphate import ATP-binding protein PstB from Chromobacterium violaceum (strain ATCC 12472 / DSM 30191 / JCM 1249 / CCUG 213 / NBRC 12614 / NCIMB 9131 / NCTC 9757 / MK).